The primary structure comprises 230 residues: Ribosome maturation factor RimM (230 aa).

One can recognise a PRC barrel domain in the interval 149–230 (ADEFYWVDLI…RVVVDWEADY (82 aa)).

This sequence belongs to the RimM family. As to quaternary structure, binds ribosomal protein uS19.

The protein localises to the cytoplasm. In terms of biological role, an accessory protein needed during the final step in the assembly of 30S ribosomal subunit, possibly for assembly of the head region. Essential for efficient processing of 16S rRNA. May be needed both before and after RbfA during the maturation of 16S rRNA. It has affinity for free ribosomal 30S subunits but not for 70S ribosomes. The sequence is that of Ribosome maturation factor RimM from Burkholderia mallei (strain NCTC 10229).